Consider the following 561-residue polypeptide: Arginine--tRNA ligase (561 aa).

The short motif at 129–139 (ANPTGPLHVGH) is the 'HIGH' region element.

The protein belongs to the class-I aminoacyl-tRNA synthetase family. Monomer.

The protein resides in the cytoplasm. It carries out the reaction tRNA(Arg) + L-arginine + ATP = L-arginyl-tRNA(Arg) + AMP + diphosphate. In Polaromonas sp. (strain JS666 / ATCC BAA-500), this protein is Arginine--tRNA ligase.